We begin with the raw amino-acid sequence, 284 residues long: MPELPEVETIRRGLARHLVGRRIGYAEVFHPRAVRRHSGGAADFTGRLIGRRIQAVLRRGKYLWFALDSDLALLAHLGMSGQFLLADAASPSPKHLRARFAFTDGDPELRFVDQRTFGGLTLAPLIADVPASISHIAPDILDVAFDEAEFHRRFTQRRTGVKRALLDQTLISGVGNIYADEALWRARLHYATPTVDISAATCRRLLAALRAVFRAALRAGGTSFDALYVNVNGQSGFFDRSLAVYGRAGQPCRRCGTAIVREPFMNRSSFRCPACQPVPRRPHW.

The Schiff-base intermediate with DNA role is filled by Pro2. Residue Glu3 is the Proton donor of the active site. Catalysis depends on Lys61, which acts as the Proton donor; for beta-elimination activity. The DNA site is built by His95, Arg115, and Arg157. The FPG-type zinc finger occupies 243–277 (AVYGRAGQPCRRCGTAIVREPFMNRSSFRCPACQP). The active-site Proton donor; for delta-elimination activity is Arg267.

The protein belongs to the FPG family. Monomer. Requires Zn(2+) as cofactor.

The catalysed reaction is Hydrolysis of DNA containing ring-opened 7-methylguanine residues, releasing 2,6-diamino-4-hydroxy-5-(N-methyl)formamidopyrimidine.. It catalyses the reaction 2'-deoxyribonucleotide-(2'-deoxyribose 5'-phosphate)-2'-deoxyribonucleotide-DNA = a 3'-end 2'-deoxyribonucleotide-(2,3-dehydro-2,3-deoxyribose 5'-phosphate)-DNA + a 5'-end 5'-phospho-2'-deoxyribonucleoside-DNA + H(+). Functionally, involved in base excision repair of DNA damaged by oxidation or by mutagenic agents. Acts as a DNA glycosylase that recognizes and removes damaged bases. Has a preference for oxidized purines, such as 7,8-dihydro-8-oxoguanine (8-oxoG). Has AP (apurinic/apyrimidinic) lyase activity and introduces nicks in the DNA strand. Cleaves the DNA backbone by beta-delta elimination to generate a single-strand break at the site of the removed base with both 3'- and 5'-phosphates. The polypeptide is Formamidopyrimidine-DNA glycosylase (Acidothermus cellulolyticus (strain ATCC 43068 / DSM 8971 / 11B)).